Here is a 103-residue protein sequence, read N- to C-terminus: uncharacterized protein (103 aa).

It is found in the mitochondrion. This is an uncharacterized protein from Claviceps purpurea (Ergot fungus).